The following is a 584-amino-acid chain: uncharacterized protein (584 aa).

PbH1 repeat units follow at residues 100–128, 139–161, 173–195, 196–225, 236–266, 313–333, 334–356, 357–382, 406–427, 456–478, and 529–554; these read QENI…RSTH, CSNV…IVSP, SEQI…SITG, CDMV…DIEG, PINV…LIEG, TSDA…IDVR, GKSV…LVYQ, SSDV…GLRA, GGNM…WIAQ, NAGA…YCST, and SAGS…QTNT.

This is an uncharacterized protein from Bacillus subtilis (strain 168).